The sequence spans 142 residues: Mitochondrial import receptor subunit TOM22 homolog (142 aa).

A compositionally biased stretch (low complexity) spans 1-11; that stretch reads MAAAVAAAGAG. The disordered stretch occupies residues 1–42; it reads MAAAVAAAGAGEPQSPDELLPKGDAEKPEEELEEDDDEELDE. Residue alanine 2 is modified to N-acetylalanine. Topologically, residues 2-83 are cytoplasmic; it reads AAAVAAAGAG…AQKMYRFSRA (82 aa). Position 15 is a phosphoserine (serine 15). Residues 27–42 show a composition bias toward acidic residues; sequence KPEEELEEDDDEELDE. The interval 41–50 is import sequence; necessary for mitochondrion outer membrane localization and integration in the TOM complex; sequence DETLSERLWG. Residue threonine 43 is modified to Phosphothreonine. Serine 45 carries the post-translational modification Phosphoserine. Residues 83–103 form a TMD; necessary for mitochondrion outer membrane localization and integration in the TOM complex region; it reads AALWIGTTSFMILVLPVVFET. A helical membrane pass occupies residues 84-103; the sequence is ALWIGTTSFMILVLPVVFET. The Mitochondrial intermembrane segment spans residues 104–142; it reads EKLQMEQQQQLQQRQILLGPNTGLSGGMPGALPSLPGKI. Residues 123-142 form a C-tail signal; necessary for mitochondrion outer membrane localization and integration in the TOM complex region; it reads PNTGLSGGMPGALPSLPGKI.

It belongs to the Tom22 family. In terms of assembly, forms part of the preprotein translocase complex of the outer mitochondrial membrane (TOM complex) which consists of at least 7 different proteins (TOMM5, TOMM6, TOMM7, TOMM20, TOMM22, TOMM40 and TOMM70). Interacts with TOMM40. Interacts with PPP2R2B. As to expression, ubiquitous.

The protein localises to the mitochondrion outer membrane. Its function is as follows. Central receptor component of the translocase of the outer membrane of mitochondria (TOM complex) responsible for the recognition and translocation of cytosolically synthesized mitochondrial preproteins. Together with the peripheral receptor TOM20 functions as the transit peptide receptor and facilitates the movement of preproteins into the translocation pore. Required for the translocation across the mitochondrial outer membrane of cytochrome P450 monooxygenases. This Homo sapiens (Human) protein is Mitochondrial import receptor subunit TOM22 homolog (TOMM22).